Consider the following 615-residue polypeptide: Lipoprotein LpqB (615 aa).

Positions 1-29 (MGADRGRGGRRRPARVVAYAVGGVVLLAG) are cleaved as a signal peptide. Residue cysteine 30 is the site of N-palmitoyl cysteine attachment. Cysteine 30 is lipidated: S-diacylglycerol cysteine. A disordered region spans residues 100–123 (PDESATVLAGGPGTESDHSGNRED). The span at 114-123 (ESDHSGNRED) shows a compositional bias: basic and acidic residues.

Belongs to the LpqB lipoprotein family.

It localises to the cell membrane. This is Lipoprotein LpqB from Streptomyces coelicolor (strain ATCC BAA-471 / A3(2) / M145).